The primary structure comprises 508 residues: Photosystem II CP47 reaction center protein (508 aa).

Helical transmembrane passes span 21 to 36 (SVHI…WAGS), 101 to 115 (IILA…MWHW), 140 to 156 (GIHL…FGAF), 203 to 218 (IAAG…FHLS), 237 to 252 (VLSS…AFVV), and 457 to 472 (CFAL…HGAR).

It belongs to the PsbB/PsbC family. PsbB subfamily. In terms of assembly, PSII is composed of 1 copy each of membrane proteins PsbA, PsbB, PsbC, PsbD, PsbE, PsbF, PsbH, PsbI, PsbJ, PsbK, PsbL, PsbM, PsbT, PsbX, PsbY, PsbZ, Psb30/Ycf12, at least 3 peripheral proteins of the oxygen-evolving complex and a large number of cofactors. It forms dimeric complexes. The cofactor is Binds multiple chlorophylls. PSII binds additional chlorophylls, carotenoids and specific lipids..

The protein localises to the plastid. It localises to the chloroplast thylakoid membrane. One of the components of the core complex of photosystem II (PSII). It binds chlorophyll and helps catalyze the primary light-induced photochemical processes of PSII. PSII is a light-driven water:plastoquinone oxidoreductase, using light energy to abstract electrons from H(2)O, generating O(2) and a proton gradient subsequently used for ATP formation. The chain is Photosystem II CP47 reaction center protein from Mesostigma viride (Green alga).